A 751-amino-acid polypeptide reads, in one-letter code: Ribosomal RNA large subunit methyltransferase K/L (751 aa).

Positions 44-155 constitute a THUMP domain; that stretch reads LAYRTCLWSR…KNKLVLSIDL (112 aa).

This sequence belongs to the methyltransferase superfamily. RlmKL family.

The protein localises to the cytoplasm. It catalyses the reaction guanosine(2445) in 23S rRNA + S-adenosyl-L-methionine = N(2)-methylguanosine(2445) in 23S rRNA + S-adenosyl-L-homocysteine + H(+). The enzyme catalyses guanosine(2069) in 23S rRNA + S-adenosyl-L-methionine = N(2)-methylguanosine(2069) in 23S rRNA + S-adenosyl-L-homocysteine + H(+). In terms of biological role, specifically methylates the guanine in position 2445 (m2G2445) and the guanine in position 2069 (m7G2069) of 23S rRNA. This chain is Ribosomal RNA large subunit methyltransferase K/L, found in Cellvibrio japonicus (strain Ueda107) (Pseudomonas fluorescens subsp. cellulosa).